We begin with the raw amino-acid sequence, 654 residues long: DNA ligase (654 aa).

Residues Asp32 to Asp36 and Ser81 to Leu82 contribute to the NAD(+) site. Lys112 functions as the N6-AMP-lysine intermediate in the catalytic mechanism. NAD(+)-binding residues include Arg133, Glu167, and Lys306. Zn(2+)-binding residues include Cys400, Cys403, Cys416, and Cys421. The BRCT domain maps to Glu577 to Glu654.

The protein belongs to the NAD-dependent DNA ligase family. LigA subfamily. Requires Mg(2+) as cofactor. It depends on Mn(2+) as a cofactor.

It carries out the reaction NAD(+) + (deoxyribonucleotide)n-3'-hydroxyl + 5'-phospho-(deoxyribonucleotide)m = (deoxyribonucleotide)n+m + AMP + beta-nicotinamide D-nucleotide.. In terms of biological role, DNA ligase that catalyzes the formation of phosphodiester linkages between 5'-phosphoryl and 3'-hydroxyl groups in double-stranded DNA using NAD as a coenzyme and as the energy source for the reaction. It is essential for DNA replication and repair of damaged DNA. The protein is DNA ligase of Helicobacter acinonychis (strain Sheeba).